The sequence spans 157 residues: MKIKIICFGKIKDKNITALINEYLSKINHFTNLTIVELSEEKINNENSIGEIEEALKKESKKLIPYLENSFNVLLDIKGVQMDSIKFANSINQNLIISKDINFYIGSSHGISESIKNKFNLKLSFSELTFNHQIFRLILLEQIYRAFSILNNTKYHK.

S-adenosyl-L-methionine-binding positions include Leu75, Gly106, and 125 to 130 (FSELTF).

Belongs to the RNA methyltransferase RlmH family. In terms of assembly, homodimer.

Its subcellular location is the cytoplasm. It catalyses the reaction pseudouridine(1915) in 23S rRNA + S-adenosyl-L-methionine = N(3)-methylpseudouridine(1915) in 23S rRNA + S-adenosyl-L-homocysteine + H(+). In terms of biological role, specifically methylates the pseudouridine at position 1915 (m3Psi1915) in 23S rRNA. The chain is Ribosomal RNA large subunit methyltransferase H from Malacoplasma penetrans (strain HF-2) (Mycoplasma penetrans).